A 161-amino-acid chain; its full sequence is Copper transporter 1 (161 aa).

2 helical membrane passes run 55-75 (GGMYALALIFVFALAVIVEFL) and 109-129 (VAYLLMLALMSFNGGVFLVAV).

This sequence belongs to the copper transporter (Ctr) (TC 1.A.56) family. SLC31A subfamily. Self-interacts. Interacts with SWEET11 and COPT2.

The protein localises to the cell membrane. Involved in the transport of copper, in cooperation with SWEET11 and COPT2. Contributes to the removal of copper (Cu) from xylem, and thus to the sensitivity toward bacterial pathogens such as X.oryzae pv. oryzae (Xoo). The sequence is that of Copper transporter 1 (COPT1) from Oryza sativa subsp. japonica (Rice).